A 54-amino-acid chain; its full sequence is MKTPLFLLLVVLASLLGLALSQDRNDTEWIQSQKDREKWCRLNLGPYLGGRCRK.

The signal sequence occupies residues 1–21 (MKTPLFLLLVVLASLLGLALS). Q22 is modified (pyrrolidone carboxylic acid). N-linked (GlcNAc...) asparagine glycosylation occurs at N25. C40 and C52 are joined by a disulfide. Residues 53–54 (RK) constitute a propeptide that is removed on maturation.

This sequence to paragonial peptide B. In terms of tissue distribution, ductus ejaculatorius.

It is found in the secreted. Functionally, induces post-mating responses; increased oviposition and reduced receptivity. This is Ductus ejaculatorius peptide 99B (Dup99B) from Drosophila melanogaster (Fruit fly).